Here is a 188-residue protein sequence, read N- to C-terminus: PRA1 family protein 3 (188 aa).

Met-1 carries the post-translational modification N-acetylmethionine. At 1–35 (MEVQVAPLRSWEDFFPGSDRFGRPDFKDISKWNNR) the chain is on the cytoplasmic side. 2 helical membrane-spanning segments follow: residues 36 to 56 (VVNNLLYYQTNYLMVAAAVVA) and 57 to 77 (IVGFLSPLNMLIGGTVVILVF). Over 78-93 (LGFVWVSHNKDILRRM) the chain is Cytoplasmic. The next 2 helical transmembrane spans lie at 94–114 (KKQYPTTFVIVIMLSSYFLIS) and 115–135 (YLGDVMVFMFGITLPLLLMFI). The Cytoplasmic segment spans residues 136-188 (HASLRLRNIKNKLENKKEEIGLKKTPMGIILDALEQQEDNINKLASYIPKVKE). The targeting to endoplasmic reticulum membrane stretch occupies residues 136 to 188 (HASLRLRNIKNKLENKKEEIGLKKTPMGIILDALEQQEDNINKLASYIPKVKE).

Belongs to the PRA1 family. In terms of assembly, binds to prenylated RAB and Ras superfamily members.

The protein resides in the endoplasmic reticulum membrane. It is found in the cell membrane. Its subcellular location is the cytoplasm. The protein localises to the cytoskeleton. Functionally, regulates intracellular concentrations of taurine and glutamate. Negatively modulates SLC1A1/EAAC1 glutamate transport activity by decreasing its affinity for glutamate in a PKC activity-dependent manner. May be involved in membrane traffic. The sequence is that of PRA1 family protein 3 (ARL6IP5) from Gallus gallus (Chicken).